The sequence spans 157 residues: Transcriptional repressor NrdR (157 aa).

Residues 3-34 fold into a zinc finger; that stretch reads CPFCRHPDSRVIDSRTSDDGLSIRRRRQCPEC. Residues 46-136 enclose the ATP-cone domain; it reads LSVIKRSGVV…VYQAFDSLED (91 aa).

It belongs to the NrdR family. It depends on Zn(2+) as a cofactor.

Functionally, negatively regulates transcription of bacterial ribonucleotide reductase nrd genes and operons by binding to NrdR-boxes. This is Transcriptional repressor NrdR from Leifsonia xyli subsp. xyli (strain CTCB07).